We begin with the raw amino-acid sequence, 3414 residues long: Genome polyprotein (3414 aa).

Residues 1-30 are disordered; sequence MVKKAILKGKGGGPPRRVSKETATKTRQPR. Over 1–98 the chain is Cytoplasmic; that stretch reads MVKKAILKGK…LQKRGKRRSA (98 aa). A propeptide spans 97 to 117 (ER anchor for the capsid protein C, removed in mature form by serine protease NS3); that stretch reads SATDWMSWLLVITLLGMTIAA. Residues 99–119 form a helical membrane-spanning segment; that stretch reads TDWMSWLLVITLLGMTIAATV. At 120 to 242 the chain is on the extracellular side; sequence RKERDGSTVI…HLTRVEGWVW (123 aa). A glycan (N-linked (GlcNAc...) asparagine; by host) is linked at asparagine 144. The helical transmembrane segment at 243-260 threads the bilayer; sequence KNRLLALAMVTVVWLTLE. Position 261 (serine 261) is a topological domain, cytoplasmic. The chain crosses the membrane as a helical span at residues 262–280; sequence VVTRVAVLVVLLCLAPVYA. At 281–727 the chain is on the extracellular side; sequence SRCTHLENRD…HTVLGGAFNS (447 aa). Cystine bridges form between cysteine 283–cysteine 310, cysteine 340–cysteine 396, cysteine 340–cysteine 401, cysteine 354–cysteine 385, cysteine 372–cysteine 396, and cysteine 372–cysteine 401. The interval 378 to 391 is fusion peptide; that stretch reads DRGWGNHCGLFGKG. N-linked (GlcNAc...) asparagine; by host glycosylation occurs at asparagine 434. 2 disulfides stabilise this stretch: cysteine 466/cysteine 570 and cysteine 587/cysteine 618. A helical membrane pass occupies residues 728 to 748; the sequence is IFGGVGFLPKLLLGVALAWLG. At 749–755 the chain is on the extracellular side; it reads LNMRNPT. The chain crosses the membrane as a helical span at residues 756–776; it reads MSMSFLLAGVLVLAMTLGVGA. Residues 777-1132 are Extracellular-facing; that stretch reads DVGCAVDTER…RSMVVADNGE (356 aa). 6 disulfides stabilise this stretch: cysteine 780/cysteine 791, cysteine 831/cysteine 920, cysteine 955/cysteine 1000, cysteine 1057/cysteine 1106, cysteine 1068/cysteine 1090, and cysteine 1089/cysteine 1093. 3 N-linked (GlcNAc...) asparagine; by host glycosylation sites follow: asparagine 861, asparagine 983, and asparagine 999. A helical membrane pass occupies residues 1133 to 1153; that stretch reads LLSEGGVPGIVALFVVLEYII. At 1154-1158 the chain is on the cytoplasmic side; sequence RRRPS. The helical transmembrane segment at 1159 to 1179 threads the bilayer; it reads TGSTVVWGGIVVLALLVTGMV. The Lumenal segment spans residues 1180–1187; the sequence is RMESLVRY. The chain crosses the membrane as a helical span at residues 1188 to 1208; sequence VVAVGITFHLELGPEIVALML. At 1209–1293 the chain is on the cytoplasmic side; sequence LQAVFELRVG…LLMALMTQQD (85 aa). A helical transmembrane segment spans residues 1294 to 1314; that stretch reads VVTVHHGLVCFLSAASACSIW. Topologically, residues 1315-1327 are lumenal; the sequence is RLLRGHREQKGLT. The chain crosses the membrane as a helical span at residues 1328-1348; the sequence is WIVPLARLLGGEGSGIRLLAF. Residues 1349–1359 are Cytoplasmic-facing; sequence WELSAHRGRRS. A helical transmembrane segment spans residues 1360-1377; it reads FSEPLTVVGVMLTLASGM. The Lumenal segment spans residues 1378–1382; sequence MRHTS. A helical transmembrane segment spans residues 1383–1403; sequence QEALCALAVASFLLLMLVLGT. Over 1404-1454 the chain is Cytoplasmic; it reads RKMQLVAEWSGCVEWHPELVNEGGEVSLRVRQDAMGNFHLTELEKEERMMA. Positions 1410–1449 are interacts with and activates NS3 protease; that stretch reads AEWSGCVEWHPELVNEGGEVSLRVRQDAMGNFHLTELEKE. Residues 1455–1475 constitute an intramembrane region (helical); sequence FWLIAGLAASAIHWSGIIGVM. Residues 1476–2160 lie on the Cytoplasmic side of the membrane; the sequence is GLWTLTKMLR…RMAERDAPEA (685 aa). The Peptidase S7 domain maps to 1490 to 1669; sequence SDLVFSGQGG…EAEKSRPNLP (180 aa). Catalysis depends on charge relay system; for serine protease NS3 activity residues histidine 1543, aspartate 1567, and serine 1627. The Helicase ATP-binding domain maps to 1675–1831; the sequence is TGWTSKGQIT…ESNGAITSEE (157 aa). Residue 1688-1695 coordinates ATP; it reads MHPGSGKT. Residues 1779-1782 carry the DEAH box motif; the sequence is DEAH. The region spanning 1841-2000 is the Helicase C-terminal domain; sequence DGFDWITEYE…TLRGPVATFY (160 aa). Position 1883 is an N6-acetyllysine; by host (lysine 1883). A helical transmembrane segment spans residues 2161–2181; it reads FLTMVEMMVLGLATLGVIWCF. Residues 2182-2189 lie on the Lumenal side of the membrane; sequence VVRTSISR. The segment at residues 2190–2210 is an intramembrane region (helical); the sequence is MMLGTLVLLASLLLLWAGGVG. Tyrosine 2211 is a topological domain (lumenal). The chain crosses the membrane as a helical span at residues 2212–2232; it reads GNMAGVALIFYTLLTVLQPEA. Residues 2233–2244 are Cytoplasmic-facing; that stretch reads GKQRSSDDNKLA. Residues 2245-2265 traverse the membrane as a helical segment; the sequence is YFLLTLCSLAGLVAANEMGFL. Residues 2266–2299 lie on the Lumenal side of the membrane; sequence EKTKADLSTVLWSEREEPRPWSEWTNVDIQPARS. The segment at residues 2300–2320 is an intramembrane region (helical); it reads WGTYVLVVSLFTPYIIHQLQT. Residues 2321-2343 lie on the Lumenal side of the membrane; it reads KIQQLVNSAVASGAQAMRDLGGG. The helical intramembrane region spans 2344 to 2364; sequence APFFGVAGHVMTLGVVSLIGA. Residues 2365–2368 are Lumenal-facing; that stretch reads TPTS. Residues 2369–2389 traverse the membrane as a helical segment; the sequence is LMVGVGLAALHLAIVVSGLEA. Topologically, residues 2390–2432 are cytoplasmic; the sequence is ELTQRAHKVFFSAMVRNPMVDGDVINPFGEGEAKPALYERRMS. The chain crosses the membrane as a helical span at residues 2433–2453; it reads LVLAIVLCLMSVVMNRTVASI. At 2454–2477 the chain is on the lumenal side; that stretch reads TEASAVGLAAAGQLLRPEADTLWT. A helical transmembrane segment spans residues 2478 to 2498; sequence MPVACGMSGVVRGSLWGFLPL. At 2499 to 3414 the chain is on the cytoplasmic side; it reads GHRLWLRASG…WELRLESSII (916 aa). Residues 2512-2776 enclose the mRNA cap 0-1 NS5-type MT domain; it reads GGSEGDTLGD…ELDLGVGTRC (265 aa). S-adenosyl-L-methionine is bound at residue serine 2567. At serine 2567 the chain carries Phosphoserine. Catalysis depends on lysine 2572, which acts as the For 2'-O-MTase activity. 6 residues coordinate S-adenosyl-L-methionine: glycine 2597, tryptophan 2598, threonine 2615, isoleucine 2616, aspartate 2642, and valine 2643. The active-site For 2'-O-MTase activity is aspartate 2657. An S-adenosyl-L-methionine-binding site is contributed by isoleucine 2658. Residues lysine 2694 and glutamate 2730 each act as for 2'-O-MTase activity in the active site. An interaction with host SCRIB region spans residues 2730–2734; that stretch reads EMYYS. Tyrosine 2732 is a binding site for S-adenosyl-L-methionine. Residues glutamate 2950, histidine 2954, cysteine 2959, and cysteine 2962 each contribute to the Zn(2+) site. The RdRp catalytic domain occupies 3040–3189; sequence GLFYADDTAG…RPLDDRFGKA (150 aa). 3 residues coordinate Zn(2+): histidine 3224, cysteine 3240, and cysteine 3359.

The protein in the N-terminal section; belongs to the class I-like SAM-binding methyltransferase superfamily. mRNA cap 0-1 NS5-type methyltransferase family. Homodimer. Interacts (via N-terminus) with host EXOC1 (via C-terminus); this interaction results in EXOC1 degradation through the proteasome degradation pathway. In terms of assembly, forms heterodimers with envelope protein E in the endoplasmic reticulum and Golgi. As to quaternary structure, homodimer; in the endoplasmic reticulum and Golgi. Interacts with protein prM. Interacts with non-structural protein 1. Homodimer; Homohexamer when secreted. Interacts with envelope protein E. In terms of assembly, interacts (via N-terminus) with serine protease NS3. As to quaternary structure, forms a heterodimer with serine protease NS3. May form homooligomers. Forms a heterodimer with NS2B. Interacts with NS4B. Interacts with unphosphorylated RNA-directed RNA polymerase NS5; this interaction stimulates RNA-directed RNA polymerase NS5 guanylyltransferase activity. In terms of assembly, interacts with serine protease NS3. As to quaternary structure, homodimer. Interacts with host STAT2; this interaction inhibits the phosphorylation of the latter, and, when all viral proteins are present (polyprotein), targets STAT2 for degradation. Interacts with serine protease NS3. Interacts with host SCRIB; this interaction targets NS5 to the cell membrane periphery and nucleus, thereby allowing efficient host nuclear STAT1 inhibition. In terms of processing, specific enzymatic cleavages in vivo yield mature proteins. Cleavages in the lumen of endoplasmic reticulum are performed by host signal peptidase, whereas cleavages in the cytoplasmic side are performed by serine protease NS3. Signal cleavage at the 2K-4B site requires a prior NS3 protease-mediated cleavage at the 4A-2K site. Post-translationally, cleaved in post-Golgi vesicles by a host furin, releasing the mature small envelope protein M, and peptide pr. This cleavage is incomplete as up to 30% of viral particles still carry uncleaved prM. N-glycosylated. In terms of processing, N-glycosylated. The excreted form is glycosylated and this is required for efficient secretion of the protein from infected cells. Post-translationally, acetylated by host KAT5. Acetylation modulates NS3 RNA-binding and unwinding activities and plays an important positive role for viral replication. Phosphorylated on serines residues. This phosphorylation may trigger NS5 nuclear localization.

The protein localises to the virion. Its subcellular location is the host nucleus. It is found in the host cytoplasm. The protein resides in the host perinuclear region. It localises to the secreted. The protein localises to the virion membrane. Its subcellular location is the host endoplasmic reticulum membrane. The enzyme catalyses Selective hydrolysis of -Xaa-Xaa-|-Yaa- bonds in which each of the Xaa can be either Arg or Lys and Yaa can be either Ser or Ala.. It catalyses the reaction RNA(n) + a ribonucleoside 5'-triphosphate = RNA(n+1) + diphosphate. It carries out the reaction a ribonucleoside 5'-triphosphate + H2O = a ribonucleoside 5'-diphosphate + phosphate + H(+). The catalysed reaction is ATP + H2O = ADP + phosphate + H(+). The enzyme catalyses a 5'-end (5'-triphosphoguanosine)-ribonucleoside in mRNA + S-adenosyl-L-methionine = a 5'-end (N(7)-methyl 5'-triphosphoguanosine)-ribonucleoside in mRNA + S-adenosyl-L-homocysteine. It catalyses the reaction a 5'-end (N(7)-methyl 5'-triphosphoguanosine)-ribonucleoside in mRNA + S-adenosyl-L-methionine = a 5'-end (N(7)-methyl 5'-triphosphoguanosine)-(2'-O-methyl-ribonucleoside) in mRNA + S-adenosyl-L-homocysteine + H(+). Functionally, plays a role in virus budding by binding to the cell membrane and gathering the viral RNA into a nucleocapsid that forms the core of a mature virus particle. During virus entry, may induce genome penetration into the host cytoplasm after hemifusion induced by the surface proteins. Can migrate to the cell nucleus where it modulates host functions. Inhibits RNA silencing by interfering with host Dicer. Its function is as follows. Prevents premature fusion activity of envelope proteins in trans-Golgi by binding to envelope protein E at pH6.0. After virion release in extracellular space, gets dissociated from E dimers. In terms of biological role, acts as a chaperone for envelope protein E during intracellular virion assembly by masking and inactivating envelope protein E fusion peptide. prM is the only viral peptide matured by host furin in the trans-Golgi network probably to avoid catastrophic activation of the viral fusion activity in acidic Golgi compartment prior to virion release. prM-E cleavage is inefficient, and many virions are only partially matured. These uncleaved prM would play a role in immune evasion. Functionally, may play a role in virus budding. Exerts cytotoxic effects by activating a mitochondrial apoptotic pathway through M ectodomain. May display a viroporin activity. Binds to host cell surface receptor and mediates fusion between viral and cellular membranes. Envelope protein is synthesized in the endoplasmic reticulum in the form of heterodimer with protein prM. They play a role in virion budding in the ER, and the newly formed immature particle is covered with 60 spikes composed of heterodimer between precursor prM and envelope protein E. The virion is transported to the Golgi apparatus where the low pH causes dissociation of PrM-E heterodimers and formation of E homodimers. prM-E cleavage is inefficient, and many virions are only partially matured. These uncleaved prM would play a role in immune evasion. Its function is as follows. Involved in immune evasion, pathogenesis and viral replication. Once cleaved off the polyprotein, is targeted to three destinations: the viral replication cycle, the plasma membrane and the extracellular compartment. Essential for viral replication. Required for formation of the replication complex and recruitment of other non-structural proteins to the ER-derived membrane structures. Excreted as a hexameric lipoparticle that plays a role against host immune response. Antagonizing the complement function. Binds to the host macrophages and dendritic cells. Inhibits signal transduction originating from Toll-like receptor 3 (TLR3). In terms of biological role, component of the viral RNA replication complex that functions in virion assembly and antagonizes the host immune response. Functionally, required cofactor for the serine protease function of NS3. May have membrane-destabilizing activity and form viroporins. Displays three enzymatic activities: serine protease, NTPase and RNA helicase. NS3 serine protease, in association with NS2B, performs its autocleavage and cleaves the polyprotein at dibasic sites in the cytoplasm: C-prM, NS2A-NS2B, NS2B-NS3, NS3-NS4A, NS4A-2K and NS4B-NS5. NS3 RNA helicase binds RNA and unwinds dsRNA in the 3' to 5' direction. Its function is as follows. Regulates the ATPase activity of the NS3 helicase activity. NS4A allows NS3 helicase to conserve energy during unwinding. In terms of biological role, functions as a signal peptide for NS4B and is required for the interferon antagonism activity of the latter. Functionally, induces the formation of ER-derived membrane vesicles where the viral replication takes place. Inhibits interferon (IFN)-induced host STAT1 phosphorylation and nuclear translocation, thereby preventing the establishment of cellular antiviral state by blocking the IFN-alpha/beta pathway. Inhibits STAT2 translocation in the nucleus after IFN-alpha treatment. Replicates the viral (+) and (-) genome, and performs the capping of genomes in the cytoplasm. NS5 methylates viral RNA cap at guanine N-7 and ribose 2'-O positions. Besides its role in genome replication, also prevents the establishment of cellular antiviral state by blocking the interferon-alpha/beta (IFN-alpha/beta) signaling pathway. Inhibits host TYK2 and STAT2 phosphorylation, thereby preventing activation of JAK-STAT signaling pathway. This Tick-borne encephalitis virus (strain Hypr) (TBEV) protein is Genome polyprotein.